Here is a 218-residue protein sequence, read N- to C-terminus: 25 kDa calcium-binding protein (218 aa).

4 consecutive EF-hand domains span residues 24-59, 66-101, 128-163, and 171-206; these read GAKTVARRIFENYDKGRKGRIENTDCVPMITEAYKS, PSSDDIKAYHRVLDRNGDGIVTYQDIEELCIRYLTG, AKLDVARRLFKRYDKDGSGQLQDDEIAGLLKDTYAE, and PTKEDVKIWLQMADTNSDGSVSLEEYEDLIIKSLQK. 17 residues coordinate Ca(2+): aspartate 37, arginine 43, aspartate 48, aspartate 79, asparagine 81, aspartate 83, aspartate 90, aspartate 141, aspartate 143, serine 145, glutamine 147, glutamate 152, aspartate 184, asparagine 186, aspartate 188, serine 190, and glutamate 195.

Its function is as follows. Expected to play a crucial role in calcium-dependent regulation of ciliary movement. This Tetrahymena thermophila protein is 25 kDa calcium-binding protein.